Here is a 613-residue protein sequence, read N- to C-terminus: 9-cis-epoxycarotenoid dioxygenase NCED5, chloroplastic (613 aa).

Residues 1 to 15 (MPTTFTPNSPASSCS) show a composition bias toward polar residues. The N-terminal 36 residues, 1 to 36 (MPTTFTPNSPASSCSIHHRASPSRGARNSVRFTRPR), are a transit peptide targeting the chloroplast. A disordered region spans residues 1–62 (MPTTFTPNSP…PPAYVPPPPP (62 aa)). Low complexity predominate over residues 37–50 (AAAAATNSVLSAPS). Residues 51–62 (SVPPAYVPPPPP) show a composition bias toward pro residues. 4 residues coordinate Fe cation: His-305, His-354, His-419, and His-600.

The protein belongs to the carotenoid oxygenase family. Requires Fe(2+) as cofactor.

Its subcellular location is the plastid. The protein resides in the chloroplast. The catalysed reaction is a 9-cis-epoxycarotenoid + O2 = a 12'-apo-carotenal + 2-cis,4-trans-xanthoxin. It catalyses the reaction 9-cis-violaxanthin + O2 = (3S,5R,6S)-5,6-epoxy-3-hydroxy-5,6-dihydro-12'-apo-beta-caroten-12'-al + 2-cis,4-trans-xanthoxin. The enzyme catalyses 9'-cis-neoxanthin + O2 = (3S,5R,6R)-3,5-dihydroxy-6,7-didehydro-5,6-dihydro-12'-apo-beta-caroten-12'-al + 2-cis,4-trans-xanthoxin. Has a 11,12(11',12') 9-cis epoxycarotenoid cleavage activity. Catalyzes the first step of abscisic-acid biosynthesis from carotenoids. The sequence is that of 9-cis-epoxycarotenoid dioxygenase NCED5, chloroplastic from Oryza sativa subsp. japonica (Rice).